Consider the following 485-residue polypeptide: NADH-quinone oxidoreductase subunit N (485 aa).

Transmembrane regions (helical) follow at residues 8-28 (LIAL…MLSI), 35-55 (FLNA…LWFV), 71-91 (GFAM…CTFA), 105-125 (FYLL…ANHL), 127-147 (ALFL…GYAF), 159-179 (YTIL…LVYA), 203-223 (LLAG…LVPF), 235-255 (PAPV…GVVM), 271-291 (VVLG…ALSQ), 297-317 (LLGY…IALQ), 326-346 (VGVY…VVSL), 373-393 (AAVM…LGFI), 408-430 (WWLV…RVAV), and 455-475 (IVVL…QPLI).

It belongs to the complex I subunit 2 family. As to quaternary structure, NDH-1 is composed of 13 different subunits. Subunits NuoA, H, J, K, L, M, N constitute the membrane sector of the complex.

The protein localises to the cell inner membrane. It carries out the reaction a quinone + NADH + 5 H(+)(in) = a quinol + NAD(+) + 4 H(+)(out). Functionally, NDH-1 shuttles electrons from NADH, via FMN and iron-sulfur (Fe-S) centers, to quinones in the respiratory chain. The immediate electron acceptor for the enzyme in this species is believed to be ubiquinone. Couples the redox reaction to proton translocation (for every two electrons transferred, four hydrogen ions are translocated across the cytoplasmic membrane), and thus conserves the redox energy in a proton gradient. The protein is NADH-quinone oxidoreductase subunit N of Salmonella typhimurium (strain LT2 / SGSC1412 / ATCC 700720).